The primary structure comprises 569 residues: Putative diguanylate cyclase DgcQ (569 aa).

2 consecutive transmembrane segments (helical) span residues 25-45 (LGPG…STLL) and 365-385 (IALT…WYVI). Residues 433–568 (HPFSVIQVDL…GRNRVFASDN (136 aa)) form the GGDEF domain. Position 441 (D441) interacts with Mg(2+). Residues N449, H454, and D458 each contribute to the substrate site. A Mg(2+)-binding site is contributed by E484. Catalysis depends on E484, which acts as the Proton acceptor.

In terms of assembly, homodimer. Mg(2+) serves as cofactor.

It is found in the cell inner membrane. It catalyses the reaction 2 GTP = 3',3'-c-di-GMP + 2 diphosphate. It functions in the pathway glycan metabolism; bacterial cellulose biosynthesis. Its pathway is purine metabolism; 3',5'-cyclic di-GMP biosynthesis. Functionally, catalyzes the synthesis of cyclic-di-GMP (c-di-GMP) via the condensation of 2 GTP molecules. Cyclic-di-GMP is a second messenger which controls cell surface-associated traits in bacteria. Involved in the regulation of cellulose production. The sequence is that of Putative diguanylate cyclase DgcQ from Shigella flexneri.